Reading from the N-terminus, the 479-residue chain is Protoheme IX farnesyltransferase (479 aa).

The segment at Met1–Leu207 is unknown. A run of 4 helical transmembrane segments spans residues Leu20–Val40, Ile64–Val84, Val98–Val118, and Leu128–Ala148. The span at Thr155–Thr164 shows a compositional bias: low complexity. Residues Thr155–Ala186 form a disordered region. The next 9 helical transmembrane spans lie at Leu207–Gly227, Pro231–Phe251, Leu271–Ile291, Ala303–Leu322, Pro324–Gly344, Trp345–Leu365, His402–Ala422, Leu423–Ile443, and His459–Ile479. Residues Met208–Thr476 form a protoheme IX prenyltransferase region.

This sequence in the C-terminal section; belongs to the UbiA prenyltransferase family. Protoheme IX farnesyltransferase subfamily.

It is found in the cell membrane. The enzyme catalyses heme b + (2E,6E)-farnesyl diphosphate + H2O = Fe(II)-heme o + diphosphate. Its pathway is porphyrin-containing compound metabolism; heme O biosynthesis; heme O from protoheme: step 1/1. In terms of biological role, converts heme B (protoheme IX) to heme O by substitution of the vinyl group on carbon 2 of heme B porphyrin ring with a hydroxyethyl farnesyl side group. The sequence is that of Protoheme IX farnesyltransferase (ctaB) from Haloquadratum walsbyi (strain DSM 16790 / HBSQ001).